The chain runs to 319 residues: 33 kDa chaperonin (319 aa).

The span at 1–10 (MTDASGSERL) shows a compositional bias: basic and acidic residues. Residues 1 to 25 (MTDASGSERLKRAKGISEGTPSSLP) form a disordered region. 2 disulfides stabilise this stretch: Cys261/Cys263 and Cys294/Cys297.

This sequence belongs to the HSP33 family. Post-translationally, under oxidizing conditions two disulfide bonds are formed involving the reactive cysteines. Under reducing conditions zinc is bound to the reactive cysteines and the protein is inactive.

The protein localises to the cytoplasm. In terms of biological role, redox regulated molecular chaperone. Protects both thermally unfolding and oxidatively damaged proteins from irreversible aggregation. Plays an important role in the bacterial defense system toward oxidative stress. This chain is 33 kDa chaperonin, found in Synechococcus sp. (strain JA-2-3B'a(2-13)) (Cyanobacteria bacterium Yellowstone B-Prime).